The following is a 308-amino-acid chain: Methionyl-tRNA formyltransferase (308 aa).

109–112 (SLLP) serves as a coordination point for (6S)-5,6,7,8-tetrahydrofolate.

It belongs to the Fmt family.

It carries out the reaction L-methionyl-tRNA(fMet) + (6R)-10-formyltetrahydrofolate = N-formyl-L-methionyl-tRNA(fMet) + (6S)-5,6,7,8-tetrahydrofolate + H(+). Its function is as follows. Attaches a formyl group to the free amino group of methionyl-tRNA(fMet). The formyl group appears to play a dual role in the initiator identity of N-formylmethionyl-tRNA by promoting its recognition by IF2 and preventing the misappropriation of this tRNA by the elongation apparatus. This chain is Methionyl-tRNA formyltransferase, found in Clostridium beijerinckii (strain ATCC 51743 / NCIMB 8052) (Clostridium acetobutylicum).